The primary structure comprises 303 residues: Glutamyl-Q tRNA(Asp) synthetase (303 aa).

Residues 16–20 (RFAPS) and Glu52 contribute to the L-glutamate site. The 'HIGH' region motif lies at 19–29 (PSPSGPLHFGS). Cys108, Cys110, Tyr122, and Cys126 together coordinate Zn(2+). Tyr177 and Arg195 together coordinate L-glutamate. Residues 233–237 (KLSKQ) carry the 'KMSKS' region motif. Lys236 lines the ATP pocket.

This sequence belongs to the class-I aminoacyl-tRNA synthetase family. GluQ subfamily. Requires Zn(2+) as cofactor.

Its function is as follows. Catalyzes the tRNA-independent activation of glutamate in presence of ATP and the subsequent transfer of glutamate onto a tRNA(Asp). Glutamate is transferred on the 2-amino-5-(4,5-dihydroxy-2-cyclopenten-1-yl) moiety of the queuosine in the wobble position of the QUC anticodon. The chain is Glutamyl-Q tRNA(Asp) synthetase from Vibrio vulnificus (strain YJ016).